Reading from the N-terminus, the 116-residue chain is MDKKTSRLRRALRARKKIQELGVNRLVVHRTPRHIYAQVINPEAQVLAVASTVEKAVKELLKSTGNVDAAKAVGKIVAERAIEKGVATVAFDRSGFKYHGRVAALADAAREAGLKF.

This sequence belongs to the universal ribosomal protein uL18 family. As to quaternary structure, part of the 50S ribosomal subunit; part of the 5S rRNA/L5/L18/L25 subcomplex. Contacts the 5S and 23S rRNAs.

Its function is as follows. This is one of the proteins that bind and probably mediate the attachment of the 5S RNA into the large ribosomal subunit, where it forms part of the central protuberance. The polypeptide is Large ribosomal subunit protein uL18 (Shewanella frigidimarina (strain NCIMB 400)).